Reading from the N-terminus, the 423-residue chain is UPF0229 protein VV1_2091 (423 aa).

Residues 81 to 111 (QFITGDKIERPKGGQGGGGAGDGDASADGEG) are disordered. The span at 93 to 102 (GGQGGGGAGD) shows a compositional bias: gly residues.

Belongs to the UPF0229 family.

The polypeptide is UPF0229 protein VV1_2091 (Vibrio vulnificus (strain CMCP6)).